Here is a 406-residue protein sequence, read N- to C-terminus: NAD(P)H-quinone oxidoreductase subunit H, organellar chromatophore (406 aa).

This sequence belongs to the complex I 49 kDa subunit family. As to quaternary structure, NDH is composed of at least 16 different subunits, 5 of which are encoded in the nucleus.

The protein localises to the plastid. Its subcellular location is the organellar chromatophore thylakoid membrane. The enzyme catalyses a quinone + NADH + H(+) = a quinol + NAD(+). Its function is as follows. NDH shuttles electrons from NAD(P)H:plastoquinone, via FMN and iron-sulfur (Fe-S) centers, to quinones in the photosynthetic chain and possibly in a chloroplast respiratory chain. The immediate electron acceptor for the enzyme in this species is believed to be plastoquinone. Couples the redox reaction to proton translocation, and thus conserves the redox energy in a proton gradient. The polypeptide is NAD(P)H-quinone oxidoreductase subunit H, organellar chromatophore (Paulinella chromatophora).